We begin with the raw amino-acid sequence, 451 residues long: Cobyrinate a,c-diamide synthase (451 aa).

The GATase cobBQ-type domain occupies 246-437 (KIGVAYDEVF…VHTHVAAMPN (192 aa)). Cys328 acts as the Nucleophile in catalysis.

The protein belongs to the CobB/CbiA family. Mg(2+) serves as cofactor.

The catalysed reaction is cob(II)yrinate + 2 L-glutamine + 2 ATP + 2 H2O = cob(II)yrinate a,c diamide + 2 L-glutamate + 2 ADP + 2 phosphate + 2 H(+). The enzyme catalyses Ni-sirohydrochlorin + 2 L-glutamine + 2 ATP + 2 H2O = Ni-sirohydrochlorin a,c-diamide + 2 L-glutamate + 2 ADP + 2 phosphate + 2 H(+). It functions in the pathway cofactor biosynthesis; adenosylcobalamin biosynthesis; cob(II)yrinate a,c-diamide from sirohydrochlorin (anaerobic route): step 10/10. Functionally, catalyzes the ATP-dependent amidation of the two carboxylate groups at positions a and c of cobyrinate, using either L-glutamine or ammonia as the nitrogen source. Involved in the biosynthesis of the unique nickel-containing tetrapyrrole coenzyme F430, the prosthetic group of methyl-coenzyme M reductase (MCR), which plays a key role in methanogenesis and anaerobic methane oxidation. Catalyzes the ATP-dependent amidation of the two carboxylate groups at positions a and c of Ni-sirohydrochlorin, using L-glutamine or ammonia as the nitrogen source. This is Cobyrinate a,c-diamide synthase from Methanobrevibacter smithii (strain ATCC 35061 / DSM 861 / OCM 144 / PS).